The sequence spans 634 residues: Kelch-like protein 22 (634 aa).

A2 is modified (N-acetylalanine). Positions 50-117 (FDVVLVVEGK…IYTSELELSL (68 aa)) constitute a BTB domain. 6 Kelch repeats span residues 299-349 (CVVG…VLNN), 350-399 (FVYL…VVGK), 400-446 (YIYA…TLQG), 448-493 (MYIT…ALLD), 495-544 (LFVI…VLDS), and 545-593 (RIYV…VLTL). T463 is subject to Phosphothreonine. Phosphotyrosine is present on Y466. At T475 the chain carries Phosphothreonine. The tract at residues 600 to 634 (EQPRGTPNRSQADADFASEVMSVSDWEEFDNSSED) is disordered. The residue at position 605 (T605) is a Phosphothreonine. Acidic residues predominate over residues 624 to 634 (DWEEFDNSSED).

As to quaternary structure, component of the BCR(KLHL22) E3 ubiquitin ligase complex, at least composed of CUL3, KLHL22 and RBX1. Interacts with PLK1. Interacts with DEPDC5 (via DEP domain); the interaction depends on amino acid availability. Interacts with YWHAE; required for the nuclear localization of KLHL22 upon amino acid starvation.

The protein localises to the cytoplasm. Its subcellular location is the cytosol. It localises to the cytoskeleton. The protein resides in the microtubule organizing center. It is found in the centrosome. The protein localises to the spindle. Its subcellular location is the nucleus. It localises to the lysosome. The protein operates within protein modification; protein ubiquitination. Functionally, substrate-specific adapter of a BCR (BTB-CUL3-RBX1) E3 ubiquitin ligase complex required for chromosome alignment and localization of PLK1 at kinetochores. The BCR(KLHL22) ubiquitin ligase complex mediates monoubiquitination of PLK1, leading to PLK1 dissociation from phosphoreceptor proteins and subsequent removal from kinetochores, allowing silencing of the spindle assembly checkpoint (SAC) and chromosome segregation. Monoubiquitination of PLK1 does not lead to PLK1 degradation. The BCR(KLHL22) ubiquitin ligase complex is also responsible for the amino acid-stimulated 'Lys-48' polyubiquitination and proteasomal degradation of DEPDC5. Through the degradation of DEPDC5, releases the GATOR1 complex-mediated inhibition of the TORC1 pathway. It is therefore an amino acid-dependent activator within the amino acid-sensing branch of the TORC1 pathway, indirectly regulating different cellular processes including cell growth and autophagy. In Mus musculus (Mouse), this protein is Kelch-like protein 22.